The primary structure comprises 480 residues: MNFETVIGLEVHVELNTNSKIFSPTSAHFGNDQNANTNVIDWSFPGVLPVLNKGVVDAGIKAALALNMDIHKKMHFDRKNYFYPDNPKAYQISQFDEPIGYNGWIEVKLEDGTTKKIGIERAHLEEDAGKNTHGTDGYSYVDLNRQGVPLIEIVSEADMRSPEEAYAYLTALKEVIQYAGISDVKMEEGSMRVDANISLRPYGQEKFGTKTELKNLNSFSNVRKGLEYEVQRQAEILRSGGQIRQETRRYDEANKATILMRVKEGAADYRYFPEPDLPLFEISDEWIEEMRTELPEFPKERRARYVSDLGLSDYDASQLTANKVTSDFFEKAVALGGDAKQVSNWLQGEVAQFLNAEGKTLEQIELTPENLVEMIAIIEDGTISSKIAKKVFVHLAKNGGGAREYVEKAGMVQISDPAILIPIIHQVFADNEAAVADFKSGKRNADKAFTGFLMKATKGQANPQVALKLLAQELAKLKEN.

This sequence belongs to the GatB/GatE family. GatB subfamily. In terms of assembly, heterotrimer of A, B and C subunits.

It carries out the reaction L-glutamyl-tRNA(Gln) + L-glutamine + ATP + H2O = L-glutaminyl-tRNA(Gln) + L-glutamate + ADP + phosphate + H(+). The enzyme catalyses L-aspartyl-tRNA(Asn) + L-glutamine + ATP + H2O = L-asparaginyl-tRNA(Asn) + L-glutamate + ADP + phosphate + 2 H(+). Functionally, allows the formation of correctly charged Asn-tRNA(Asn) or Gln-tRNA(Gln) through the transamidation of misacylated Asp-tRNA(Asn) or Glu-tRNA(Gln) in organisms which lack either or both of asparaginyl-tRNA or glutaminyl-tRNA synthetases. The reaction takes place in the presence of glutamine and ATP through an activated phospho-Asp-tRNA(Asn) or phospho-Glu-tRNA(Gln). This Streptococcus pneumoniae serotype 4 (strain ATCC BAA-334 / TIGR4) protein is Aspartyl/glutamyl-tRNA(Asn/Gln) amidotransferase subunit B.